Here is a 371-residue protein sequence, read N- to C-terminus: Putative F-box/kelch-repeat protein At3g10510 (371 aa).

Positions 13 to 61 (SVMTSIPDDVIMECIAPRVPRYNHSMLSLVSKQFRSLVASPRLYKTRSL) constitute an F-box domain. Kelch repeat units lie at residues 123 to 165 (NIFV…DMPV), 178 to 229 (KIYI…GPSS), and 257 to 305 (NECV…YIVS).

The chain is Putative F-box/kelch-repeat protein At3g10510 from Arabidopsis thaliana (Mouse-ear cress).